Here is a 151-residue protein sequence, read N- to C-terminus: Probable cGMP 3',5'-cyclic phosphodiesterase subunit delta (151 aa).

The protein belongs to the PDE6D/unc-119 family. In terms of assembly, interacts with Pde6.

It is found in the nucleus. The protein localises to the cytoplasm. This Anopheles gambiae (African malaria mosquito) protein is Probable cGMP 3',5'-cyclic phosphodiesterase subunit delta.